We begin with the raw amino-acid sequence, 200 residues long: dTTP/UTP pyrophosphatase (200 aa).

The active-site Proton acceptor is the D72.

The protein belongs to the Maf family. YhdE subfamily. It depends on a divalent metal cation as a cofactor.

It is found in the cytoplasm. It catalyses the reaction dTTP + H2O = dTMP + diphosphate + H(+). The catalysed reaction is UTP + H2O = UMP + diphosphate + H(+). Nucleoside triphosphate pyrophosphatase that hydrolyzes dTTP and UTP. May have a dual role in cell division arrest and in preventing the incorporation of modified nucleotides into cellular nucleic acids. The protein is dTTP/UTP pyrophosphatase of Pseudomonas savastanoi pv. phaseolicola (strain 1448A / Race 6) (Pseudomonas syringae pv. phaseolicola (strain 1448A / Race 6)).